Here is a 101-residue protein sequence, read N- to C-terminus: NADH-quinone oxidoreductase subunit K (101 aa).

A run of 3 helical transmembrane segments spans residues 4–24, 29–49, and 65–85; these read LSHY…GIFI, IIVI…NLVA, and FVLT…VVFF.

It belongs to the complex I subunit 4L family. As to quaternary structure, NDH-1 is composed of 14 different subunits. Subunits NuoA, H, J, K, L, M, N constitute the membrane sector of the complex.

Its subcellular location is the cell inner membrane. It carries out the reaction a quinone + NADH + 5 H(+)(in) = a quinol + NAD(+) + 4 H(+)(out). In terms of biological role, NDH-1 shuttles electrons from NADH, via FMN and iron-sulfur (Fe-S) centers, to quinones in the respiratory chain. The immediate electron acceptor for the enzyme in this species is believed to be ubiquinone. Couples the redox reaction to proton translocation (for every two electrons transferred, four hydrogen ions are translocated across the cytoplasmic membrane), and thus conserves the redox energy in a proton gradient. The chain is NADH-quinone oxidoreductase subunit K from Methylobacterium nodulans (strain LMG 21967 / CNCM I-2342 / ORS 2060).